The primary structure comprises 137 residues: Small ribosomal subunit protein uS12 (137 aa).

The disordered stretch occupies residues 1-23 (MPTINQLVRKGRKSKSSKSDAPA). At Asp102 the chain carries 3-methylthioaspartic acid.

Belongs to the universal ribosomal protein uS12 family. As to quaternary structure, part of the 30S ribosomal subunit. Contacts proteins S8 and S17. May interact with IF1 in the 30S initiation complex.

Functionally, with S4 and S5 plays an important role in translational accuracy. In terms of biological role, interacts with and stabilizes bases of the 16S rRNA that are involved in tRNA selection in the A site and with the mRNA backbone. Located at the interface of the 30S and 50S subunits, it traverses the body of the 30S subunit contacting proteins on the other side and probably holding the rRNA structure together. The combined cluster of proteins S8, S12 and S17 appears to hold together the shoulder and platform of the 30S subunit. This Levilactobacillus brevis (strain ATCC 367 / BCRC 12310 / CIP 105137 / JCM 1170 / LMG 11437 / NCIMB 947 / NCTC 947) (Lactobacillus brevis) protein is Small ribosomal subunit protein uS12.